The following is a 90-amino-acid chain: Small ribosomal subunit protein uS15c (90 aa).

It belongs to the universal ribosomal protein uS15 family. As to quaternary structure, part of the 30S ribosomal subunit.

Its subcellular location is the plastid. The protein localises to the chloroplast. This is Small ribosomal subunit protein uS15c (rps15) from Platanus occidentalis (Sycamore).